The sequence spans 25 residues: Small ribosomal subunit protein eS32 (25 aa).

Positions 1-25 are disordered; the sequence is MRDKWRKKRVRRLKRKRRKVRARSK.

Belongs to the eukaryotic ribosomal protein eS32 family. In terms of assembly, component of the small ribosomal subunit. Mature ribosomes consist of a small (40S) and a large (60S) subunit. The 40S subunit contains about 32 different proteins and 1 molecule of RNA (18S). The 60S subunit contains 45 different proteins and 3 molecules of RNA (25S, 5.8S and 5S).

It is found in the cytoplasm. Functionally, component of the ribosome, a large ribonucleoprotein complex responsible for the synthesis of proteins in the cell. The small ribosomal subunit (SSU) binds messenger RNAs (mRNAs) and translates the encoded message by selecting cognate aminoacyl-transfer RNA (tRNA) molecules. The large subunit (LSU) contains the ribosomal catalytic site termed the peptidyl transferase center (PTC), which catalyzes the formation of peptide bonds, thereby polymerizing the amino acids delivered by tRNAs into a polypeptide chain. The nascent polypeptides leave the ribosome through a tunnel in the LSU and interact with protein factors that function in enzymatic processing, targeting, and the membrane insertion of nascent chains at the exit of the ribosomal tunnel. In Candida albicans (strain SC5314 / ATCC MYA-2876) (Yeast), this protein is Small ribosomal subunit protein eS32.